Reading from the N-terminus, the 247-residue chain is ATP synthase subunit a, chloroplastic (247 aa).

The next 5 helical transmembrane spans lie at 38–58 (QVLI…IIAV), 95–115 (VPFI…GALL), 133–153 (DINT…YAGL), 199–219 (LVVV…VMFL), and 220–240 (GLFT…AYIG).

It belongs to the ATPase A chain family. In terms of assembly, F-type ATPases have 2 components, CF(1) - the catalytic core - and CF(0) - the membrane proton channel. CF(1) has five subunits: alpha(3), beta(3), gamma(1), delta(1), epsilon(1). CF(0) has four main subunits: a, b, b' and c.

Its subcellular location is the plastid. The protein localises to the chloroplast thylakoid membrane. Its function is as follows. Key component of the proton channel; it plays a direct role in the translocation of protons across the membrane. This Phalaenopsis aphrodite subsp. formosana (Moth orchid) protein is ATP synthase subunit a, chloroplastic.